We begin with the raw amino-acid sequence, 659 residues long: Ion-translocating oxidoreductase complex subunit C (659 aa).

2 4Fe-4S ferredoxin-type domains span residues 366–397 and 407–436; these read TEMG…QQLY and KARN…VQYY. [4Fe-4S] cluster is bound by residues Cys-377, Cys-380, Cys-383, Cys-387, Cys-416, Cys-419, Cys-422, and Cys-426.

This sequence belongs to the 4Fe4S bacterial-type ferredoxin family. RnfC subfamily. In terms of assembly, the complex is composed of six subunits: RnfA, RnfB, RnfC, RnfD, RnfE and RnfG. [4Fe-4S] cluster serves as cofactor.

The protein resides in the cell inner membrane. In terms of biological role, part of a membrane-bound complex that couples electron transfer with translocation of ions across the membrane. This Yersinia pestis bv. Antiqua (strain Nepal516) protein is Ion-translocating oxidoreductase complex subunit C.